A 301-amino-acid chain; its full sequence is MIDWAESESGKGDKVEPKEENEAEESKDGEGTQSESGQKKESSKEAEDADVDRRVHTTVGSGSGAKGFRERANENVDRGDGKVCGGVGDVDAGVGTTGTNGGRWVVLTEEIARAIESKYGTKIDVYRDEVPAQIIEVERSLQKELGISREGVAEQTERLRDLRRKEKSETHARVAEKGRRKQGKRVHGDAQKESTEDEKTPEEPTSVGITIEGVMSQKKLLSMIGGVERKMAPIGARESAVMLVSNSIKDVVRATAYFTAPTGDPHWKEVAREASKKKNILAYTSTGGDVKTEFLHLIDHL.

Disordered stretches follow at residues 1-99 (MIDW…TTGT) and 163-208 (RRKE…TSVG). Composition is skewed to basic and acidic residues over residues 8-30 (ESGK…KDGE), 37-55 (GQKK…DRRV), and 67-81 (GFRE…RGDG). Lysine 82 is a binding site for ATP. Basic and acidic residues-rich tracts occupy residues 163 to 177 (RRKE…VAEK) and 186 to 202 (VHGD…KTPE).

Belongs to the orbivirus VP6 family. In terms of assembly, homohexamer.

The protein localises to the virion. The enzyme catalyses ATP + H2O = ADP + phosphate + H(+). In terms of biological role, ATP dependent RNA helicase essential for RNA packaging and viral transcription. Possesses ss- and dsRNA-binding capacity. This chain is Helicase VP6-A (Segment-9), found in Bluetongue virus 2 (isolate USA) (BTV 2).